We begin with the raw amino-acid sequence, 157 residues long: Molybdopterin synthase catalytic subunit (157 aa).

Substrate is bound by residues 103-104 (HR), K119, and 126-128 (KKE).

It belongs to the MoaE family. MOCS2B subfamily. In terms of assembly, heterotetramer; composed of 2 small (MOCS2A) and 2 large (MOCS2B) subunits.

The protein localises to the cytoplasm. It catalyses the reaction 2 [molybdopterin-synthase sulfur-carrier protein]-C-terminal-Gly-aminoethanethioate + cyclic pyranopterin phosphate + H2O = molybdopterin + 2 [molybdopterin-synthase sulfur-carrier protein]-C-terminal Gly-Gly + 2 H(+). It functions in the pathway cofactor biosynthesis; molybdopterin biosynthesis. In terms of biological role, catalytic subunit of the molybdopterin synthase complex, a complex that catalyzes the conversion of precursor Z into molybdopterin. Acts by mediating the incorporation of 2 sulfur atoms from thiocarboxylated MOCS2A into precursor Z to generate a dithiolene group. The sequence is that of Molybdopterin synthase catalytic subunit from Culex quinquefasciatus (Southern house mosquito).